The following is a 606-amino-acid chain: 4-hydroxy-3-methylbut-2-en-1-yl diphosphate synthase (flavodoxin) (606 aa).

Cys-513, Cys-516, Cys-547, and Glu-554 together coordinate [4Fe-4S] cluster.

It belongs to the IspG family. The cofactor is [4Fe-4S] cluster.

It carries out the reaction (2E)-4-hydroxy-3-methylbut-2-enyl diphosphate + oxidized [flavodoxin] + H2O + 2 H(+) = 2-C-methyl-D-erythritol 2,4-cyclic diphosphate + reduced [flavodoxin]. It functions in the pathway isoprenoid biosynthesis; isopentenyl diphosphate biosynthesis via DXP pathway; isopentenyl diphosphate from 1-deoxy-D-xylulose 5-phosphate: step 5/6. In terms of biological role, converts 2C-methyl-D-erythritol 2,4-cyclodiphosphate (ME-2,4cPP) into 1-hydroxy-2-methyl-2-(E)-butenyl 4-diphosphate. The chain is 4-hydroxy-3-methylbut-2-en-1-yl diphosphate synthase (flavodoxin) from Chlamydia abortus (strain DSM 27085 / S26/3) (Chlamydophila abortus).